A 495-amino-acid chain; its full sequence is UDP-N-acetylmuramoyl-L-alanyl-D-glutamate--2,6-diaminopimelate ligase (495 aa).

Ser-29 is a binding site for UDP-N-acetyl-alpha-D-muramoyl-L-alanyl-D-glutamate. 111-117 (GTNGKTS) provides a ligand contact to ATP. Residues 153 to 154 (TT), Ser-180, Gln-186, and Arg-188 each bind UDP-N-acetyl-alpha-D-muramoyl-L-alanyl-D-glutamate. At Lys-220 the chain carries N6-carboxylysine. Meso-2,6-diaminopimelate contacts are provided by residues Arg-384, 408 to 411 (DNPR), Gly-459, and Glu-463. A Meso-diaminopimelate recognition motif motif is present at residues 408–411 (DNPR).

Belongs to the MurCDEF family. MurE subfamily. Mg(2+) serves as cofactor. In terms of processing, carboxylation is probably crucial for Mg(2+) binding and, consequently, for the gamma-phosphate positioning of ATP.

It localises to the cytoplasm. The enzyme catalyses UDP-N-acetyl-alpha-D-muramoyl-L-alanyl-D-glutamate + meso-2,6-diaminopimelate + ATP = UDP-N-acetyl-alpha-D-muramoyl-L-alanyl-gamma-D-glutamyl-meso-2,6-diaminopimelate + ADP + phosphate + H(+). The protein operates within cell wall biogenesis; peptidoglycan biosynthesis. Catalyzes the addition of meso-diaminopimelic acid to the nucleotide precursor UDP-N-acetylmuramoyl-L-alanyl-D-glutamate (UMAG) in the biosynthesis of bacterial cell-wall peptidoglycan. The protein is UDP-N-acetylmuramoyl-L-alanyl-D-glutamate--2,6-diaminopimelate ligase of Xanthomonas oryzae pv. oryzae (strain MAFF 311018).